A 135-amino-acid polypeptide reads, in one-letter code: Transcriptional activator protein (135 aa).

A Nuclear localization signal motif is present at residues 17–32 (KVTHRQVKKRAIRRRR). A zinc finger spans residues 37-54 (CGCSYYLHINCFNHGFTH). Positions 77 to 88 (VFHNHQAPTTTI) are enriched in polar residues. Residues 77-117 (VFHNHQAPTTTIPAEPGHHNSPGSIQSQPEEGAGDSQMFSQ) are disordered. The interval 120–135 (DLDNLTASDWSFLKGL) is transactivation.

It belongs to the geminiviridae transcriptional activator protein family. Monomer. Homodimer. Homooligomer. Self-interaction correlates with nuclear localization and efficient activation of transcription. Monomers suppress local silencing by interacting with and inactivating host adenosine kinase 2 (ADK2) in the cytoplasm. Interacts with and inhibits host SNF1 kinase. Binds to ssDNA. In terms of processing, phosphorylated.

It localises to the host nucleus. The protein localises to the host cytoplasm. Functionally, strong activator of the late viral genes promoters. Enhances the expression of the capsid protein and nuclear shuttle protein. Acts as a suppressor of RNA-mediated gene silencing, also known as post-transcriptional gene silencing (PTGS), a mechanism of plant viral defense that limits the accumulation of viral RNAs. Suppresses the host RNA silencing by inhibiting adenosine kinase 2 (ADK2), a kinase involved in a general methylation pathway. Also suppresses the host basal defense by interacting with and inhibiting SNF1 kinase, a key regulator of cell metabolism implicated in innate antiviral defense. Determines pathogenicity. This is Transcriptional activator protein from Hewittia sublobata (Coralbush).